The primary structure comprises 129 residues: MTTDVIADMLTRIRNANQRMLKTVNIPSSKMKLEIANILKEEGFISSFTVEGEVKKTITIELKYQGKQRVISGLKKISKPGLRVYAPANEIPQVLNGLGIAIVSTSQGIMTGKQARLSNIGGEVLAFVW.

The protein belongs to the universal ribosomal protein uS8 family. As to quaternary structure, part of the 30S ribosomal subunit. Contacts proteins S5 and S12.

One of the primary rRNA binding proteins, it binds directly to 16S rRNA central domain where it helps coordinate assembly of the platform of the 30S subunit. In Mesoplasma florum (strain ATCC 33453 / NBRC 100688 / NCTC 11704 / L1) (Acholeplasma florum), this protein is Small ribosomal subunit protein uS8.